We begin with the raw amino-acid sequence, 288 residues long: 3-methyl-2-oxobutanoate hydroxymethyltransferase (288 aa).

Residues D48 and D87 each coordinate Mg(2+). 3-methyl-2-oxobutanoate is bound by residues 48 to 49 (DS), D87, and K116. Mg(2+) is bound at residue E118. The active-site Proton acceptor is the E185.

The protein belongs to the PanB family. In terms of assembly, homodecamer; pentamer of dimers. Mg(2+) is required as a cofactor.

The protein resides in the cytoplasm. It catalyses the reaction 3-methyl-2-oxobutanoate + (6R)-5,10-methylene-5,6,7,8-tetrahydrofolate + H2O = 2-dehydropantoate + (6S)-5,6,7,8-tetrahydrofolate. It participates in cofactor biosynthesis; coenzyme A biosynthesis. Functionally, catalyzes the reversible reaction in which hydroxymethyl group from 5,10-methylenetetrahydrofolate is transferred onto alpha-ketoisovalerate to form ketopantoate. The protein is 3-methyl-2-oxobutanoate hydroxymethyltransferase of Hyperthermus butylicus (strain DSM 5456 / JCM 9403 / PLM1-5).